The sequence spans 222 residues: MEKLTLSFITLTVLSAIFTAASAADATPSQVVLDIAGHPVQSNVQYYIIPAKIGTGGGLIPSNRNLSTQDLCLNLDIVQSSSPFVSGLPVTFSPLNTKVKHVQLSASLNLEFDSTVWLCPDSKVWRIDHSVQLRKSFVSIGGQKGKGNSWFQIQEDGDAYKLMYCPISSIVACINVSLEIDDHGVRRLVLSTDQSFVVKFQKAYDSNSNCNLKSNSRMFLFL.

An N-terminal signal peptide occupies residues 1–23 (MEKLTLSFITLTVLSAIFTAASA). Asn65 carries an N-linked (GlcNAc...) asparagine glycan. Cystine bridges form between Cys72/Cys119 and Cys165/Cys173. N-linked (GlcNAc...) asparagine glycosylation occurs at Asn175.

Belongs to the protease inhibitor I3 (leguminous Kunitz-type inhibitor) family.

In terms of biological role, exhibits Kunitz trypsin protease inhibitor activity. This is Kunitz trypsin inhibitor 3 from Arabidopsis thaliana (Mouse-ear cress).